A 140-amino-acid polypeptide reads, in one-letter code: Phosphoribosyl-AMP cyclohydrolase (140 aa).

Position 85 (aspartate 85) interacts with Mg(2+). Cysteine 86 is a Zn(2+) binding site. 2 residues coordinate Mg(2+): aspartate 87 and aspartate 89. 2 residues coordinate Zn(2+): cysteine 102 and cysteine 109.

Belongs to the PRA-CH family. As to quaternary structure, homodimer. Requires Mg(2+) as cofactor. It depends on Zn(2+) as a cofactor.

The protein localises to the cytoplasm. The enzyme catalyses 1-(5-phospho-beta-D-ribosyl)-5'-AMP + H2O = 1-(5-phospho-beta-D-ribosyl)-5-[(5-phospho-beta-D-ribosylamino)methylideneamino]imidazole-4-carboxamide. Its pathway is amino-acid biosynthesis; L-histidine biosynthesis; L-histidine from 5-phospho-alpha-D-ribose 1-diphosphate: step 3/9. In terms of biological role, catalyzes the hydrolysis of the adenine ring of phosphoribosyl-AMP. The polypeptide is Phosphoribosyl-AMP cyclohydrolase (Bradyrhizobium diazoefficiens (strain JCM 10833 / BCRC 13528 / IAM 13628 / NBRC 14792 / USDA 110)).